The sequence spans 397 residues: Probable peptidoglycan glycosyltransferase FtsW (397 aa).

At 1 to 30 the chain is on the cytoplasmic side; sequence MYGLEMLEKIKLEYDKWACLTPKNSLYDRT. Residues 31 to 51 traverse the membrane as a helical segment; the sequence is LVWLFLSLLMIGFIMVTSASI. The Periplasmic portion of the chain corresponds to 52–61; it reads PVSTRLNNDP. The chain crosses the membrane as a helical span at residues 62-82; that stretch reads FHFAIRDSIYLACSLLAFAFV. Over 83 to 94 the chain is Cytoplasmic; that stretch reads VKIPMRNWEKYN. Residues 95-115 form a helical membrane-spanning segment; the sequence is VPLFLLSLLFLASVLIFGRSV. Over 116–126 the chain is Periplasmic; that stretch reads NGSIRWIQLGP. The chain crosses the membrane as a helical span at residues 127-146; that stretch reads INFQPAELSKLAIICYFSSF. The Cytoplasmic segment spans residues 147-158; it reads YVRKYDEMRNRS. 2 helical membrane passes run 159-179 and 180-200; these read ASVI…LLQP and DLGS…IMGA. Position 201 (Lys201) is a topological domain, cytoplasmic. The helical transmembrane segment at 202-222 threads the bilayer; that stretch reads VMQFLLLIVTASVSFILLVLT. Topologically, residues 223–280 are periplasmic; it reads SEYRLKRVTSFLDPFADAYGDGFQLSNAQMAFGQGQLWGQGLGNSVQKLEYLPEAHTD. A helical membrane pass occupies residues 281-301; sequence FVMAVVAEEFGFIGIIFMVVL. Residues 302-325 lie on the Cytoplasmic side of the membrane; that stretch reads LLCLSFRAIKISRDALKLEARFRG. The helical transmembrane segment at 326 to 346 threads the bilayer; the sequence is FFAFGVAIWVFLQGSVNLGVA. Topologically, residues 347-356 are periplasmic; it reads SGALPTKGLT. A helical membrane pass occupies residues 357 to 377; the sequence is FPLVSYGGSSLVIMSVAIAIL. The Cytoplasmic portion of the chain corresponds to 378 to 397; that stretch reads LRIDYENRLTRVGHAQIKEP.

Belongs to the SEDS family. FtsW subfamily.

The protein resides in the cell inner membrane. It carries out the reaction [GlcNAc-(1-&gt;4)-Mur2Ac(oyl-L-Ala-gamma-D-Glu-L-Lys-D-Ala-D-Ala)](n)-di-trans,octa-cis-undecaprenyl diphosphate + beta-D-GlcNAc-(1-&gt;4)-Mur2Ac(oyl-L-Ala-gamma-D-Glu-L-Lys-D-Ala-D-Ala)-di-trans,octa-cis-undecaprenyl diphosphate = [GlcNAc-(1-&gt;4)-Mur2Ac(oyl-L-Ala-gamma-D-Glu-L-Lys-D-Ala-D-Ala)](n+1)-di-trans,octa-cis-undecaprenyl diphosphate + di-trans,octa-cis-undecaprenyl diphosphate + H(+). It functions in the pathway cell wall biogenesis; peptidoglycan biosynthesis. In terms of biological role, peptidoglycan polymerase that is essential for cell division. The chain is Probable peptidoglycan glycosyltransferase FtsW from Haemophilus ducreyi (strain 35000HP / ATCC 700724).